The primary structure comprises 473 residues: LEC14B protein (473 aa).

WD repeat units follow at residues 212–242 (GYSFGVFSIKFSTDGREIVAGTSDESICVYD), 254–285 (AHESDVNSVCFADESGHLIYSGSDDNLCKVWD), 301–331 (GHLEGITFIDSRGDGRYFISNGKDQTIKLWD), 377–413 (GHSVLCTLIRCYFSPDYSTGQKYIYTGSHDANVYIYD), and 425–455 (YHKATVRDCSWHPNYPMLVSSSFDGEIVKWE).

Belongs to the WD repeat LEC14B family.

This Lithospermum erythrorhizon (Purple gromwell) protein is LEC14B protein.